Reading from the N-terminus, the 108-residue chain is Protein YcgL (108 aa).

The YcgL domain maps to 12 to 96; that stretch reads MFCVIYRSSK…SPEDLLKQHL (85 aa).

The sequence is that of Protein YcgL from Shigella dysenteriae serotype 1 (strain Sd197).